The sequence spans 397 residues: Elongation factor Tu (397 aa).

A tr-type G domain is found at 10 to 206 (KPHVNIGTIG…AIDSYIPTPE (197 aa)). The G1 stretch occupies residues 19–26 (GHVDHGKT). GTP is bound at residue 19–26 (GHVDHGKT). Position 26 (T26) interacts with Mg(2+). The segment at 60–64 (GITIN) is G2. The interval 81 to 84 (DCPG) is G3. GTP is bound by residues 81–85 (DCPGH) and 136–139 (NKAD). Residues 136–139 (NKAD) are G4. The G5 stretch occupies residues 174 to 176 (SAL).

Belongs to the TRAFAC class translation factor GTPase superfamily. Classic translation factor GTPase family. EF-Tu/EF-1A subfamily. In terms of assembly, monomer.

The protein localises to the cytoplasm. It carries out the reaction GTP + H2O = GDP + phosphate + H(+). Its function is as follows. GTP hydrolase that promotes the GTP-dependent binding of aminoacyl-tRNA to the A-site of ribosomes during protein biosynthesis. The protein is Elongation factor Tu of Clostridium botulinum (strain Loch Maree / Type A3).